Consider the following 148-residue polypeptide: uncharacterized protein (148 aa).

The protein belongs to the serpin family. Poxviruses subfamily.

This is an uncharacterized protein from Fowlpox virus (strain NVSL) (FPV).